Reading from the N-terminus, the 254-residue chain is Phytolongin Phyl1.1 (254 aa).

The Longin domain maps to Cys12 to Glu113. Positions Glu138–His173 are disordered. Polar residues predominate over residues Gly145–Lys155. Residues Ile226–Cys246 form a helical; Anchor for type IV membrane protein membrane-spanning segment.

The protein belongs to the synaptobrevin family.

The protein resides in the membrane. In terms of biological role, non-SNARE longin protein involved in membrane-trafficking machinery. The polypeptide is Phytolongin Phyl1.1 (Arabidopsis thaliana (Mouse-ear cress)).